The primary structure comprises 455 residues: Cysteine--tRNA ligase (455 aa).

Residue Cys-28 coordinates Zn(2+). The 'HIGH' region signature appears at 30–40; it reads MTVYDYCHLGH. Cys-209, His-234, and Glu-238 together coordinate Zn(2+). Residues 266–270 carry the 'KMSKS' region motif; it reads KMSKS. Position 269 (Lys-269) interacts with ATP.

The protein belongs to the class-I aminoacyl-tRNA synthetase family. In terms of assembly, monomer. The cofactor is Zn(2+).

The protein resides in the cytoplasm. The enzyme catalyses tRNA(Cys) + L-cysteine + ATP = L-cysteinyl-tRNA(Cys) + AMP + diphosphate. This is Cysteine--tRNA ligase from Methylobacillus flagellatus (strain ATCC 51484 / DSM 6875 / VKM B-1610 / KT).